Reading from the N-terminus, the 962-residue chain is Translation initiation factor IF-2 (962 aa).

Disordered stretches follow at residues 122–263 (EVGV…EPAR), 293–327 (TEEV…TRRK), and 341–362 (IAAQ…AKEP). Low complexity predominate over residues 156–173 (AVEPQTVVPPVAAPAAEV). The segment covering 188–202 (KPPEEKETKVKHAEP) has biased composition (basic and acidic residues). Residues 244 to 256 (RPKKAKKRRRKKV) are compositionally biased toward basic residues. 2 stretches are compositionally biased toward basic and acidic residues: residues 308–327 (RPEE…TRRK) and 344–362 (QDDR…AKEP). The 170-residue stretch at 455–624 (RRPPVITVMG…LLQAELLELK (170 aa)) folds into the tr-type G domain. A G1 region spans residues 464-471 (GHVDHGKT). 464 to 471 (GHVDHGKT) provides a ligand contact to GTP. Residues 489-493 (GITQH) form a G2 region. Residues 510-513 (DTPG) form a G3 region. GTP contacts are provided by residues 510 to 514 (DTPGH) and 564 to 567 (NKVD). The tract at residues 564 to 567 (NKVD) is G4. The tract at residues 600–602 (SAK) is G5.

It belongs to the TRAFAC class translation factor GTPase superfamily. Classic translation factor GTPase family. IF-2 subfamily.

It is found in the cytoplasm. One of the essential components for the initiation of protein synthesis. Protects formylmethionyl-tRNA from spontaneous hydrolysis and promotes its binding to the 30S ribosomal subunits. Also involved in the hydrolysis of GTP during the formation of the 70S ribosomal complex. The chain is Translation initiation factor IF-2 from Syntrophobacter fumaroxidans (strain DSM 10017 / MPOB).